We begin with the raw amino-acid sequence, 216 residues long: Fibroblast growth factor 19 (216 aa).

Positions 1 to 24 (MRSGCVVVHVWILAGLWLAVAGRP) are cleaved as a signal peptide. 2 cysteine pairs are disulfide-bonded: C58–C70 and C102–C120.

It belongs to the heparin-binding growth factors family. Interacts with FGFR1, FGFR2, FGFR3 and FGFR4. Affinity between fibroblast growth factors (FGFs) and their receptors is increased by KL, KLB and heparan sulfate glycosaminoglycans that function as coreceptors. Interacts with KL; this interaction is direct. Interacts with KLB; this interaction is direct. Interacts with FGFR4 in the presence of heparin, KL or KLB. Interacts with MALRD1. As to expression, expressed in fetal brain, cartilage, retina, and adult gall bladder.

The protein localises to the secreted. Its function is as follows. Involved in the suppression of bile acid biosynthesis through down-regulation of CYP7A1 expression, following positive regulation of the JNK and ERK1/2 cascades. Stimulates glucose uptake in adipocytes. Activity requires the presence of KLB and FGFR4. This chain is Fibroblast growth factor 19 (FGF19), found in Homo sapiens (Human).